We begin with the raw amino-acid sequence, 2671 residues long: Stalled ribosome sensor GCN1 (2671 aa).

Ala2 bears the N-acetylalanine mark. HEAT repeat units lie at residues 140 to 178, 257 to 293, 294 to 331, 385 to 423, 425 to 459, 460 to 500, 560 to 597, 599 to 636, 700 to 732, and 733 to 772; these read NKLV…ENPG, EFKD…LDLS, QYAL…QCSD, CVAE…EVPK, LTDW…GDTL, LQAL…SKLS, SKVQ…SLGG, KLAN…MGKT, AFIT…SLSV, and LSPD…PAGE. Ser729 carries the post-translational modification Phosphoserine. Phosphoserine is present on Ser786. Residues 804–865 adopt a coiled-coil conformation; the sequence is QIIEMELKEE…EAALGLLDAI (62 aa). 37 HEAT repeats span residues 879–918, 979–1016, 1035–1072, 1078–1115, 1155–1192, 1210–1250, 1251–1289, 1290–1332, 1335–1372, 1374–1410, 1413–1451, 1455–1492, 1493–1530, 1534–1571, 1573–1609, 1611–1648, 1653–1690, 1692–1729, 1731–1769, 1773–1810, 1812–1848, 1921–1958, 1959–1996, 2001–2038, 2039–2074, 2076–2108, 2111–2146, 2147–2184, 2188–2225, 2259–2296, 2301–2338, 2339–2380, 2382–2417, 2422–2459, 2546–2583, 2588–2625, and 2627–2661; these read VLVD…TLGT, SLVF…HAQL, LPRV…SSSG, FAEQ…VLPS, DLQS…RYQR, YRPP…YLDS, SQVK…AHGK, ENVN…HLDK, PKVK…AVKE, AGGM…GLGI, LKQQ…MLGK, PYVV…NLSA, HGVK…CAPK, SCLP…VIRN, EILA…HFID, PSLA…LTDQ, PYLP…GMGE, CFED…GLGV, KLEK…TFGD, PYVG…MYAE, AIAL…HISG, EILP…KLGE, KILP…STSR, FFSE…TIGH, QALE…VKSR, VLPY…LTRH, VILP…VEDD, TGHR…RSKA, SHLR…KLDA, RGVT…LTSA, PSVV…GKVG, IALK…IHVK, DPLF…GAGS, AIRK…FLTD, QLPP…EPRP, QTIK…MRRG, and ELLQ…QADS. The segment at 2260–2408 is RWDBD region; it reads GVTSILPVLR…GIRDTMLQAL (149 aa). Position 2276 is a phosphoserine (Ser2276).

Belongs to the GCN1 family. In terms of assembly, interacts with EIF2AK4/GCN2; this interaction stimulates the EIF2AK4/GCN2 kinase activity and is impaired by IMPACT upon a variety of stress conditions, such as amino acid depletion, UV-C irradiation, proteasome inhibitor treatment and glucose deprivation. Interacts with IMPACT; this prevents the interaction of GCN1 with EIF2AK4/GCN2 and inhibits EIF2AK4/GCN2 kinase activity. Interacts with RNF14; interaction takes place following ribosome stalling and promotes recruitment of RNF14. Expressed in the hypothalamus, cortex and hippocampus.

The protein localises to the cytoplasm. Its function is as follows. Ribosome collision sensor that plays a key role in the RNF14-RNF25 translation quality control pathway, a pathway that takes place when a ribosome has stalled during translation, and which promotes ubiquitination and degradation of translation factors on stalled ribosomes. Directly binds to the ribosome and acts as a sentinel for colliding ribosomes: activated following ribosome stalling and promotes recruitment of RNF14, which directly ubiquitinates EEF1A1/eEF1A, leading to its degradation. In addition to EEF1A1/eEF1A, the RNF14-RNF25 translation quality control pathway mediates degradation of ETF1/eRF1 and ubiquitination of ribosomal protein. GCN1 also acts as a positive activator of the integrated stress response (ISR) by mediating activation of EIF2AK4/GCN2 in response to amino acid starvation. Interaction with EIF2AK4/GCN2 on translating ribosomes stimulates EIF2AK4/GCN2 kinase activity, leading to phosphorylation of eukaryotic translation initiation factor 2 (eIF-2-alpha/EIF2S1). EIF2S1/eIF-2-alpha phosphorylation converts EIF2S1/eIF-2-alpha into a global protein synthesis inhibitor, leading to a global attenuation of cap-dependent translation, and thus to a reduced overall utilization of amino acids, while concomitantly initiating the preferential translation of ISR-specific mRNAs, such as the transcriptional activator ATF4, and hence allowing ATF4-mediated reprogramming of amino acid biosynthetic gene expression to alleviate nutrient depletion. This Mus musculus (Mouse) protein is Stalled ribosome sensor GCN1.